Reading from the N-terminus, the 497-residue chain is Probable malate:quinone oxidoreductase (497 aa).

It belongs to the MQO family. It depends on FAD as a cofactor.

The enzyme catalyses (S)-malate + a quinone = a quinol + oxaloacetate. Its pathway is carbohydrate metabolism; tricarboxylic acid cycle; oxaloacetate from (S)-malate (quinone route): step 1/1. This is Probable malate:quinone oxidoreductase from Rhodopseudomonas palustris (strain ATCC BAA-98 / CGA009).